The following is a 626-amino-acid chain: DNA mismatch repair protein MutL (626 aa).

The segment at 377–413 (EEPQAVKQPTQLWQPSTKPIIEEPIQEEKSWDSNEEG) is disordered. Positions 383–393 (KQPTQLWQPST) are enriched in polar residues.

Belongs to the DNA mismatch repair MutL/HexB family.

This protein is involved in the repair of mismatches in DNA. It is required for dam-dependent methyl-directed DNA mismatch repair. May act as a 'molecular matchmaker', a protein that promotes the formation of a stable complex between two or more DNA-binding proteins in an ATP-dependent manner without itself being part of a final effector complex. In Bacillus anthracis (strain A0248), this protein is DNA mismatch repair protein MutL.